Consider the following 397-residue polypeptide: MSKLDSLFTAALEQAAQRQVRRRLRRATAAPPGRLALDGRTLVNFSSNDYLGLARHPLLAERASLWATRHGAGAQASRLVCGNLDLHEQVEAKLARLKGTEAALLLASGWQANAAVLPALFKAAAAQGEPQVYTDRLNHASLHHGCQAAGVRQIRFRHNDLAHLEHLLAERAGAPGARFIVTESVFSMDGDRADVPALAALAARHHTFLYLDEAHATGVLGPRGMGLAGLAPGGVDLAMGTFSKGLGSFGAYVAGSRALCDYLVNACSGFIYTTALPPAVLGAIDAALDLVPRLDQARAALLGHGERLRASLAAQGIDCGASSTQIVPAIVGDAGHALALAAELERRGLLAVAIRPPTVPAGTSRLRIALSAAHGETELDQLIEALAAGWRAVRQAA.

Position 22 (arginine 22) interacts with substrate. Pyridoxal 5'-phosphate is bound at residue 109 to 110; it reads GW. Residue histidine 139 coordinates substrate. Residues serine 187, 212–215, and 241–244 each bind pyridoxal 5'-phosphate; these read DEAH and TFSK. The residue at position 244 (lysine 244) is an N6-(pyridoxal phosphate)lysine. Threonine 358 contacts substrate.

Belongs to the class-II pyridoxal-phosphate-dependent aminotransferase family. BioF subfamily. As to quaternary structure, homodimer. It depends on pyridoxal 5'-phosphate as a cofactor.

The catalysed reaction is 6-carboxyhexanoyl-[ACP] + L-alanine + H(+) = (8S)-8-amino-7-oxononanoate + holo-[ACP] + CO2. It participates in cofactor biosynthesis; biotin biosynthesis. Its function is as follows. Catalyzes the decarboxylative condensation of pimeloyl-[acyl-carrier protein] and L-alanine to produce 8-amino-7-oxononanoate (AON), [acyl-carrier protein], and carbon dioxide. The protein is Putative 8-amino-7-oxononanoate synthase (bioF) of Bordetella parapertussis (strain 12822 / ATCC BAA-587 / NCTC 13253).